A 292-amino-acid chain; its full sequence is 1D-myo-inositol 2-acetamido-2-deoxy-alpha-D-glucopyranoside deacetylase (292 aa).

Zn(2+)-binding residues include His11, Asp14, and His146.

Belongs to the MshB deacetylase family. It depends on Zn(2+) as a cofactor.

The enzyme catalyses 1D-myo-inositol 2-acetamido-2-deoxy-alpha-D-glucopyranoside + H2O = 1D-myo-inositol 2-amino-2-deoxy-alpha-D-glucopyranoside + acetate. Catalyzes the deacetylation of 1D-myo-inositol 2-acetamido-2-deoxy-alpha-D-glucopyranoside (GlcNAc-Ins) in the mycothiol biosynthesis pathway. The polypeptide is 1D-myo-inositol 2-acetamido-2-deoxy-alpha-D-glucopyranoside deacetylase (Acidothermus cellulolyticus (strain ATCC 43068 / DSM 8971 / 11B)).